The sequence spans 311 residues: MNKKSTAIFLMGPTASGKTDLAIQLHQELPVEVISVDSALIYKGMDIGTAKPNAQELALTPHRLIDIKDPSENYSAAEFRHDALQEMQKITQQGKIPLLVGGTMLYYKALLEGLSPLPSADEKVRLEIEQKAEKFGWATLHNELAKIDPISAQRINPNDSQRINRALEVFYLTGQSLTELTAQKGKEIPYHIIQFAIAPDRAVLHQRIEQRFHKMIEQGFQQEVEKLYQRSDLHPNLPSIRCVGYRQMWEYLQGNYDKDEMIFRGICATRQLAKRQLTWLRGWKSPIEWLDSLNPKSTKEKIIKTIKHNCK.

ATP is bound at residue 12–19 (GPTASGKT). Position 14–19 (14–19 (TASGKT)) interacts with substrate. Interaction with substrate tRNA regions lie at residues 37–40 (DSAL), 161–165 (QRINR), and 241–246 (RCVGYR).

It belongs to the IPP transferase family. As to quaternary structure, monomer. Mg(2+) serves as cofactor.

It carries out the reaction adenosine(37) in tRNA + dimethylallyl diphosphate = N(6)-dimethylallyladenosine(37) in tRNA + diphosphate. Its function is as follows. Catalyzes the transfer of a dimethylallyl group onto the adenine at position 37 in tRNAs that read codons beginning with uridine, leading to the formation of N6-(dimethylallyl)adenosine (i(6)A). This chain is tRNA dimethylallyltransferase, found in Histophilus somni (strain 129Pt) (Haemophilus somnus).